A 427-amino-acid polypeptide reads, in one-letter code: Glutamate-1-semialdehyde 2,1-aminomutase (427 aa).

Lys-268 is modified (N6-(pyridoxal phosphate)lysine).

Belongs to the class-III pyridoxal-phosphate-dependent aminotransferase family. HemL subfamily. Pyridoxal 5'-phosphate is required as a cofactor.

Its subcellular location is the cytoplasm. It catalyses the reaction (S)-4-amino-5-oxopentanoate = 5-aminolevulinate. It participates in porphyrin-containing compound metabolism; protoporphyrin-IX biosynthesis; 5-aminolevulinate from L-glutamyl-tRNA(Glu): step 2/2. The protein is Glutamate-1-semialdehyde 2,1-aminomutase of Methanococcus maripaludis (strain C6 / ATCC BAA-1332).